The following is a 343-amino-acid chain: 3-isopropylmalate dehydrogenase (343 aa).

Substrate is bound by residues Arg-94, Arg-104, Arg-128, and Asp-218. Positions 218, 242, and 246 each coordinate Mg(2+). An NAD(+)-binding site is contributed by 278 to 290 (GSAPDIAGQNKAN).

Belongs to the isocitrate and isopropylmalate dehydrogenases family. LeuB type 2 subfamily. Homodimer. It depends on Mg(2+) as a cofactor. Requires Mn(2+) as cofactor.

It is found in the cytoplasm. The catalysed reaction is (2R,3S)-3-isopropylmalate + NAD(+) = 4-methyl-2-oxopentanoate + CO2 + NADH. The protein operates within amino-acid biosynthesis; L-leucine biosynthesis; L-leucine from 3-methyl-2-oxobutanoate: step 3/4. Its function is as follows. Catalyzes the oxidation of 3-carboxy-2-hydroxy-4-methylpentanoate (3-isopropylmalate) to 3-carboxy-4-methyl-2-oxopentanoate. The product decarboxylates to 4-methyl-2 oxopentanoate. This chain is 3-isopropylmalate dehydrogenase, found in Bifidobacterium longum (strain DJO10A).